The primary structure comprises 168 residues: 2-C-methyl-D-erythritol 2,4-cyclodiphosphate synthase (168 aa).

A divalent metal cation is bound by residues D8 and H10. 4-CDP-2-C-methyl-D-erythritol 2-phosphate is bound by residues 8–10 (DLH) and 34–35 (HS). H42 is an a divalent metal cation binding site. 4-CDP-2-C-methyl-D-erythritol 2-phosphate contacts are provided by residues 56-58 (DIG), 61-65 (FPDTD), 132-135 (TTTE), and R142.

Belongs to the IspF family. Homotrimer. Requires a divalent metal cation as cofactor.

It catalyses the reaction 4-CDP-2-C-methyl-D-erythritol 2-phosphate = 2-C-methyl-D-erythritol 2,4-cyclic diphosphate + CMP. It participates in isoprenoid biosynthesis; isopentenyl diphosphate biosynthesis via DXP pathway; isopentenyl diphosphate from 1-deoxy-D-xylulose 5-phosphate: step 4/6. In terms of biological role, involved in the biosynthesis of isopentenyl diphosphate (IPP) and dimethylallyl diphosphate (DMAPP), two major building blocks of isoprenoid compounds. Catalyzes the conversion of 4-diphosphocytidyl-2-C-methyl-D-erythritol 2-phosphate (CDP-ME2P) to 2-C-methyl-D-erythritol 2,4-cyclodiphosphate (ME-CPP) with a corresponding release of cytidine 5-monophosphate (CMP). In Desulfosudis oleivorans (strain DSM 6200 / JCM 39069 / Hxd3) (Desulfococcus oleovorans), this protein is 2-C-methyl-D-erythritol 2,4-cyclodiphosphate synthase.